Consider the following 187-residue polypeptide: Peptidyl-tRNA hydrolase (187 aa).

Y15 provides a ligand contact to tRNA. The active-site Proton acceptor is H20. TRNA-binding residues include F64, N66, and N112.

The protein belongs to the PTH family. In terms of assembly, monomer.

The protein resides in the cytoplasm. It carries out the reaction an N-acyl-L-alpha-aminoacyl-tRNA + H2O = an N-acyl-L-amino acid + a tRNA + H(+). Hydrolyzes ribosome-free peptidyl-tRNAs (with 1 or more amino acids incorporated), which drop off the ribosome during protein synthesis, or as a result of ribosome stalling. Functionally, catalyzes the release of premature peptidyl moieties from peptidyl-tRNA molecules trapped in stalled 50S ribosomal subunits, and thus maintains levels of free tRNAs and 50S ribosomes. The protein is Peptidyl-tRNA hydrolase of Parabacteroides distasonis (strain ATCC 8503 / DSM 20701 / CIP 104284 / JCM 5825 / NCTC 11152).